Consider the following 123-residue polypeptide: Small ribosomal subunit protein uS13c (123 aa).

The disordered stretch occupies residues 90–123; the sequence is GKRHRNSLPVRGQRTRTNARSRRGAKKTVTGKKK. Positions 102–123 are enriched in basic residues; it reads QRTRTNARSRRGAKKTVTGKKK.

It belongs to the universal ribosomal protein uS13 family. In terms of assembly, part of the 30S ribosomal subunit.

It localises to the plastid. The protein localises to the chloroplast. Located at the top of the head of the 30S subunit, it contacts several helices of the 16S rRNA. The sequence is that of Small ribosomal subunit protein uS13c from Thalassiosira pseudonana (Marine diatom).